Reading from the N-terminus, the 396-residue chain is Acetate kinase (396 aa).

Asn-7 serves as a coordination point for Mg(2+). Lys-14 serves as a coordination point for ATP. A substrate-binding site is contributed by Arg-88. Catalysis depends on Asp-145, which acts as the Proton donor/acceptor. ATP is bound by residues 205–209 (HLGNG), 279–281 (DFR), and 327–331 (GIGEN). Mg(2+) is bound at residue Glu-381.

The protein belongs to the acetokinase family. Homodimer. Requires Mg(2+) as cofactor. The cofactor is Mn(2+).

It is found in the cytoplasm. It carries out the reaction acetate + ATP = acetyl phosphate + ADP. Its pathway is metabolic intermediate biosynthesis; acetyl-CoA biosynthesis; acetyl-CoA from acetate: step 1/2. Functionally, catalyzes the formation of acetyl phosphate from acetate and ATP. Can also catalyze the reverse reaction. This Campylobacter jejuni subsp. doylei (strain ATCC BAA-1458 / RM4099 / 269.97) protein is Acetate kinase.